The following is a 344-amino-acid chain: GTP 3',8-cyclase (344 aa).

The region spanning 19–245 (PFGRAVTYLR…DIPYRTGGPA (227 aa)) is the Radical SAM core domain. Arg-28 is a GTP binding site. 2 residues coordinate [4Fe-4S] cluster: Cys-35 and Cys-39. Tyr-41 serves as a coordination point for S-adenosyl-L-methionine. Residue Cys-42 participates in [4Fe-4S] cluster binding. Arg-77 provides a ligand contact to GTP. Gly-81 is a binding site for S-adenosyl-L-methionine. Thr-111 serves as a coordination point for GTP. S-adenosyl-L-methionine is bound at residue Ser-135. Lys-171 provides a ligand contact to GTP. S-adenosyl-L-methionine is bound at residue Met-205. Residues Cys-268 and Cys-271 each contribute to the [4Fe-4S] cluster site. Position 273-275 (273-275 (RVR)) interacts with GTP. Cys-285 serves as a coordination point for [4Fe-4S] cluster.

Belongs to the radical SAM superfamily. MoaA family. As to quaternary structure, monomer and homodimer. Requires [4Fe-4S] cluster as cofactor.

It catalyses the reaction GTP + AH2 + S-adenosyl-L-methionine = (8S)-3',8-cyclo-7,8-dihydroguanosine 5'-triphosphate + 5'-deoxyadenosine + L-methionine + A + H(+). It participates in cofactor biosynthesis; molybdopterin biosynthesis. Functionally, catalyzes the cyclization of GTP to (8S)-3',8-cyclo-7,8-dihydroguanosine 5'-triphosphate. This Brucella abortus (strain S19) protein is GTP 3',8-cyclase.